A 708-amino-acid polypeptide reads, in one-letter code: DNA-directed RNA polymerase III subunit RPC5 (708 aa).

Basic and acidic residues predominate over residues 146-155 (DAKHREREAA). The tract at residues 146-170 (DAKHREREAANEAGDSSQDEAEDDV) is disordered. Phosphoserine is present on residues S161 and S162. K171 participates in a covalent cross-link: Glycyl lysine isopeptide (Lys-Gly) (interchain with G-Cter in SUMO2). A Phosphoserine modification is found at S192. Phosphotyrosine is present on Y224. K432 participates in a covalent cross-link: Glycyl lysine isopeptide (Lys-Gly) (interchain with G-Cter in SUMO2). The tract at residues 485–552 (QLRVPAVPPG…DSFNGHPPQG (68 aa)) is disordered. Residue K498 forms a Glycyl lysine isopeptide (Lys-Gly) (interchain with G-Cter in SUMO1); alternate linkage. K498 is covalently cross-linked (Glycyl lysine isopeptide (Lys-Gly) (interchain with G-Cter in SUMO2); alternate). The span at 502–519 (VSEEGEEDEEQEAEEEPM) shows a compositional bias: acidic residues. Phosphoserine occurs at positions 503 and 522. The segment at 556-708 (TPVARELKAF…MWYLKGTVQS (153 aa)) is required for Pol III complex stability. Residue K659 forms a Glycyl lysine isopeptide (Lys-Gly) (interchain with G-Cter in SUMO2) linkage.

Component of the RNA polymerase III complex consisting of at least 17 subunits: a ten-subunit horseshoe-shaped catalytic core composed of POLR3A/RPC1, POLR3B/RPC2, POLR1C/RPAC1, POLR1D/RPAC2, POLR3K/RPC10, POLR2E/RPABC1, POLR2F/RPABC2, POLR2H/RPABC3, POLR2K/RPABC4 and POLR2L/RPABC5; the stalk composed of two subunits POLR3H/RPC8 and CRCP/RPC9, forming a structural mobile part that protrudes out of the core and functions primarily in transcription initiation; and additional subunits homologous to general transcription factors of the RNA polymerase II machinery, POLR3D/RPC4-POLR3E/RPC5 heterodimer and POLR3/CRPC3-POLR3F/RPC6-POLR3G/RPC7 heterotrimer.

The protein localises to the nucleus. DNA-dependent RNA polymerase catalyzes the transcription of DNA into RNA using the four ribonucleoside triphosphates as substrates. Specific peripheric component of RNA polymerase III (Pol III) which synthesizes small non-coding RNAs including 5S rRNA, snRNAs, tRNAs and miRNAs from at least 500 distinct genomic loci. Assembles with POLR3D/RPC4 forming a subcomplex that binds the Pol III core. Enables recruitment of Pol III at transcription initiation site and drives transcription initiation from both type 2 and type 3 DNA promoters. Required for efficient transcription termination and reinitiation. Plays a key role in sensing and limiting infection by intracellular bacteria and DNA viruses. Acts as a nuclear and cytosolic DNA sensor involved in innate immune response. Can sense non-self dsDNA that serves as template for transcription into dsRNA. The non-self RNA polymerase III transcripts, such as Epstein-Barr virus-encoded RNAs (EBERs) induce type I interferon and NF-kappa-B through the RIG-I pathway. This Homo sapiens (Human) protein is DNA-directed RNA polymerase III subunit RPC5.